A 581-amino-acid polypeptide reads, in one-letter code: Arginine--tRNA ligase (581 aa).

A 'HIGH' region motif is present at residues P126–H136.

The protein belongs to the class-I aminoacyl-tRNA synthetase family. Monomer.

Its subcellular location is the cytoplasm. It catalyses the reaction tRNA(Arg) + L-arginine + ATP = L-arginyl-tRNA(Arg) + AMP + diphosphate. The protein is Arginine--tRNA ligase of Shewanella putrefaciens (strain CN-32 / ATCC BAA-453).